The sequence spans 452 residues: Probable E3 ubiquitin-protein ligase ARI15 (452 aa).

The TRIAD supradomain stretch occupies residues Ser22–Ala256. Zn(2+) contacts are provided by Cys26, Cys29, Cys54, His56, Cys59, Cys62, Cys83, Cys88, Cys128, Cys133, Cys154, Cys156, Cys161, Cys164, His169, Cys174, Cys208, Cys211, Cys229, Cys231, Cys236, Cys239, His246, and Cys252. The segment at Cys26–Cys88 adopts an RING-type 1 zinc-finger fold. Residues Ala106–Cys174 form an IBR-type zinc finger. Residues Cys208 to Cys239 form an RING-type 2; atypical zinc finger. Residues Asn414 to Ser445 form a RanBP2-type zinc finger.

Belongs to the RBR family. Ariadne subfamily. Requires Zn(2+) as cofactor. In terms of tissue distribution, ubiquitous.

It catalyses the reaction [E2 ubiquitin-conjugating enzyme]-S-ubiquitinyl-L-cysteine + [acceptor protein]-L-lysine = [E2 ubiquitin-conjugating enzyme]-L-cysteine + [acceptor protein]-N(6)-ubiquitinyl-L-lysine.. The protein operates within protein modification; protein ubiquitination. Might act as an E3 ubiquitin-protein ligase, or as part of E3 complex, which accepts ubiquitin from specific E2 ubiquitin-conjugating enzymes and then transfers it to substrates. The protein is Probable E3 ubiquitin-protein ligase ARI15 (ARI15) of Arabidopsis thaliana (Mouse-ear cress).